The primary structure comprises 448 residues: Probable glycine dehydrogenase (decarboxylating) subunit 1 (448 aa).

The protein belongs to the GcvP family. N-terminal subunit subfamily. As to quaternary structure, the glycine cleavage system is composed of four proteins: P, T, L and H. In this organism, the P 'protein' is a heterodimer of two subunits.

The enzyme catalyses N(6)-[(R)-lipoyl]-L-lysyl-[glycine-cleavage complex H protein] + glycine + H(+) = N(6)-[(R)-S(8)-aminomethyldihydrolipoyl]-L-lysyl-[glycine-cleavage complex H protein] + CO2. Functionally, the glycine cleavage system catalyzes the degradation of glycine. The P protein binds the alpha-amino group of glycine through its pyridoxal phosphate cofactor; CO(2) is released and the remaining methylamine moiety is then transferred to the lipoamide cofactor of the H protein. This Bacillus velezensis (strain DSM 23117 / BGSC 10A6 / LMG 26770 / FZB42) (Bacillus amyloliquefaciens subsp. plantarum) protein is Probable glycine dehydrogenase (decarboxylating) subunit 1.